The sequence spans 562 residues: Probable malate:quinone oxidoreductase (562 aa).

The protein belongs to the MQO family. FAD serves as cofactor.

The catalysed reaction is (S)-malate + a quinone = a quinol + oxaloacetate. It participates in carbohydrate metabolism; tricarboxylic acid cycle; oxaloacetate from (S)-malate (quinone route): step 1/1. The polypeptide is Probable malate:quinone oxidoreductase (Stenotrophomonas maltophilia (strain K279a)).